The primary structure comprises 163 residues: HTH-type transcriptional regulator IscR (163 aa).

The HTH rrf2-type domain maps to 2–131 (RLTSKGRYAV…NNITLGELVN (130 aa)). A DNA-binding region (H-T-H motif) is located at residues 28-51 (LADISERQGISLSYLEQLFSRLRK). 3 residues coordinate [2Fe-2S] cluster: Cys92, Cys98, and Cys104.

[2Fe-2S] cluster is required as a cofactor.

Regulates the transcription of several operons and genes involved in the biogenesis of Fe-S clusters and Fe-S-containing proteins. The polypeptide is HTH-type transcriptional regulator IscR (Klebsiella pneumoniae subsp. pneumoniae (strain ATCC 700721 / MGH 78578)).